We begin with the raw amino-acid sequence, 194 residues long: Probable RNA 2'-phosphotransferase (194 aa).

Belongs to the KptA/TPT1 family.

Removes the 2'-phosphate from RNA via an intermediate in which the phosphate is ADP-ribosylated by NAD followed by a presumed transesterification to release the RNA and generate ADP-ribose 1''-2''-cyclic phosphate (APPR&gt;P). May function as an ADP-ribosylase. This chain is Probable RNA 2'-phosphotransferase, found in Burkholderia lata (strain ATCC 17760 / DSM 23089 / LMG 22485 / NCIMB 9086 / R18194 / 383).